Reading from the N-terminus, the 204-residue chain is 3-isopropylmalate dehydratase small subunit (204 aa).

Belongs to the LeuD family. LeuD type 1 subfamily. In terms of assembly, heterodimer of LeuC and LeuD.

The enzyme catalyses (2R,3S)-3-isopropylmalate = (2S)-2-isopropylmalate. Its pathway is amino-acid biosynthesis; L-leucine biosynthesis; L-leucine from 3-methyl-2-oxobutanoate: step 2/4. Its function is as follows. Catalyzes the isomerization between 2-isopropylmalate and 3-isopropylmalate, via the formation of 2-isopropylmaleate. In Vesicomyosocius okutanii subsp. Calyptogena okutanii (strain HA), this protein is 3-isopropylmalate dehydratase small subunit.